The primary structure comprises 433 residues: 5-methylthioadenosine/S-adenosylhomocysteine deaminase (433 aa).

2 residues coordinate Zn(2+): His-67 and His-69. Residues Glu-96, Arg-148, and His-187 each coordinate substrate. His-214 is a Zn(2+) binding site. Residues Glu-217 and Asp-302 each contribute to the substrate site. Asp-302 serves as a coordination point for Zn(2+).

This sequence belongs to the metallo-dependent hydrolases superfamily. MTA/SAH deaminase family. It depends on Zn(2+) as a cofactor.

The catalysed reaction is S-adenosyl-L-homocysteine + H2O + H(+) = S-inosyl-L-homocysteine + NH4(+). The enzyme catalyses S-methyl-5'-thioadenosine + H2O + H(+) = S-methyl-5'-thioinosine + NH4(+). Its function is as follows. Catalyzes the deamination of 5-methylthioadenosine and S-adenosyl-L-homocysteine into 5-methylthioinosine and S-inosyl-L-homocysteine, respectively. Is also able to deaminate adenosine. The chain is 5-methylthioadenosine/S-adenosylhomocysteine deaminase from Carboxydothermus hydrogenoformans (strain ATCC BAA-161 / DSM 6008 / Z-2901).